A 98-amino-acid chain; its full sequence is NADH-ubiquinone oxidoreductase chain 4L (98 aa).

The next 3 membrane-spanning stretches (helical) occupy residues 1–21, 29–49, and 58–78; these read MPIIYMNIMLSFIISLLGMLI, SLLCLEGMMLSLFIMSTLMAL, and IVPVALLVFAACEAAVGLALL.

The protein belongs to the complex I subunit 4L family. In terms of assembly, core subunit of respiratory chain NADH dehydrogenase (Complex I) which is composed of 45 different subunits.

It localises to the mitochondrion inner membrane. It catalyses the reaction a ubiquinone + NADH + 5 H(+)(in) = a ubiquinol + NAD(+) + 4 H(+)(out). Functionally, core subunit of the mitochondrial membrane respiratory chain NADH dehydrogenase (Complex I) which catalyzes electron transfer from NADH through the respiratory chain, using ubiquinone as an electron acceptor. Part of the enzyme membrane arm which is embedded in the lipid bilayer and involved in proton translocation. This chain is NADH-ubiquinone oxidoreductase chain 4L (MT-ND4L), found in Semnopithecus entellus (Northern plains gray langur).